The chain runs to 103 residues: Large ribosomal subunit protein bL21 (103 aa).

It belongs to the bacterial ribosomal protein bL21 family. Part of the 50S ribosomal subunit. Contacts protein L20.

This protein binds to 23S rRNA in the presence of protein L20. This chain is Large ribosomal subunit protein bL21, found in Aliivibrio fischeri (strain ATCC 700601 / ES114) (Vibrio fischeri).